The sequence spans 207 residues: Large ribosomal subunit protein uL4 (207 aa).

The segment at 48–70 is disordered; the sequence is KAQKTRSEVSGGGAKPWRQKGTG.

The protein belongs to the universal ribosomal protein uL4 family. As to quaternary structure, part of the 50S ribosomal subunit.

In terms of biological role, one of the primary rRNA binding proteins, this protein initially binds near the 5'-end of the 23S rRNA. It is important during the early stages of 50S assembly. It makes multiple contacts with different domains of the 23S rRNA in the assembled 50S subunit and ribosome. Forms part of the polypeptide exit tunnel. The sequence is that of Large ribosomal subunit protein uL4 from Francisella tularensis subsp. holarctica (strain FTNF002-00 / FTA).